We begin with the raw amino-acid sequence, 470 residues long: Methylenetetrahydrofolate--tRNA-(uracil-5-)-methyltransferase TrmFO (470 aa).

Gly-10 to Gly-15 serves as a coordination point for FAD.

Belongs to the MnmG family. TrmFO subfamily. FAD serves as cofactor.

It localises to the cytoplasm. It catalyses the reaction uridine(54) in tRNA + (6R)-5,10-methylene-5,6,7,8-tetrahydrofolate + NADH + H(+) = 5-methyluridine(54) in tRNA + (6S)-5,6,7,8-tetrahydrofolate + NAD(+). It carries out the reaction uridine(54) in tRNA + (6R)-5,10-methylene-5,6,7,8-tetrahydrofolate + NADPH + H(+) = 5-methyluridine(54) in tRNA + (6S)-5,6,7,8-tetrahydrofolate + NADP(+). Functionally, catalyzes the folate-dependent formation of 5-methyl-uridine at position 54 (M-5-U54) in all tRNAs. The polypeptide is Methylenetetrahydrofolate--tRNA-(uracil-5-)-methyltransferase TrmFO (Prochlorococcus marinus subsp. pastoris (strain CCMP1986 / NIES-2087 / MED4)).